The sequence spans 123 residues: Large ribosomal subunit protein eL8 (123 aa).

Belongs to the eukaryotic ribosomal protein eL8 family. Part of the 50S ribosomal subunit. Probably part of the RNase P complex.

It localises to the cytoplasm. In terms of biological role, multifunctional RNA-binding protein that recognizes the K-turn motif in ribosomal RNA, the RNA component of RNase P, box H/ACA, box C/D and box C'/D' sRNAs. The polypeptide is Large ribosomal subunit protein eL8 (Pyrococcus abyssi (strain GE5 / Orsay)).